Here is a 152-residue protein sequence, read N- to C-terminus: Adrenodoxin-like protein 2, mitochondrial (152 aa).

The N-terminal 29 residues, 1–29 (MLVINSCRAASRLALRSLNLRSPIATRTF), are a transit peptide targeting the mitochondrion. In terms of domain architecture, 2Fe-2S ferredoxin-type spans 41–146 (VNITFVRANG…GLEVHVPSTI (106 aa)). Residues Cys-80, Cys-86, Cys-89, and Cys-127 each coordinate [2Fe-2S] cluster.

It belongs to the adrenodoxin/putidaredoxin family. [2Fe-2S] cluster is required as a cofactor.

Its subcellular location is the mitochondrion. Required for ecdysteroidogenesis in the prothoracic gland which is necessary for larval to pupal transition. The chain is Adrenodoxin-like protein 2, mitochondrial from Drosophila melanogaster (Fruit fly).